A 501-amino-acid chain; its full sequence is Pyruvate kinase (501 aa).

Position 50 (arginine 50) interacts with substrate. Residues asparagine 52, serine 54, aspartate 85, and threonine 86 each contribute to the K(+) site. ATP is bound at residue 52–55 (NFSH). Arginine 92 and lysine 178 together coordinate ATP. Glutamate 243 contributes to the Mg(2+) binding site. Positions 266, 267, and 299 each coordinate substrate. A Mg(2+)-binding site is contributed by aspartate 267.

It belongs to the pyruvate kinase family. In terms of assembly, homotetramer. Mg(2+) is required as a cofactor. The cofactor is K(+).

The catalysed reaction is pyruvate + ATP = phosphoenolpyruvate + ADP + H(+). It participates in carbohydrate degradation; glycolysis; pyruvate from D-glyceraldehyde 3-phosphate: step 5/5. This Lachancea kluyveri (strain ATCC 58438 / CBS 3082 / BCRC 21498 / NBRC 1685 / JCM 7257 / NCYC 543 / NRRL Y-12651) (Yeast) protein is Pyruvate kinase (PYK1).